The following is a 454-amino-acid chain: Elongation factor Tu, mitochondrial (454 aa).

Residues 1 to 51 (MASVVLRNPSSKRLVPFSSQIYSRCGASVTSSYSISHSIGGDDLSSSTFGT) constitute a mitochondrion transit peptide. In terms of domain architecture, tr-type G spans 65-261 (KPHVNVGTIG…AVDEYIPDPV (197 aa)). Positions 74–81 (GHVDHGKT) are G1. Residue 74–81 (GHVDHGKT) coordinates GTP. Threonine 82 is modified (phosphothreonine). The G2 stretch occupies residues 115–119 (GITIA). A G3 region spans residues 136–139 (DCPG). GTP is bound by residues 136–140 (DCPGH) and 191–194 (NKVD). The segment at 191–194 (NKVD) is G4. The G5 stretch occupies residues 229 to 231 (SAL).

The protein belongs to the TRAFAC class translation factor GTPase superfamily. Classic translation factor GTPase family. EF-Tu/EF-1A subfamily.

It is found in the mitochondrion. Functionally, this protein promotes the GTP-dependent binding of aminoacyl-tRNA to the A-site of ribosomes during protein biosynthesis. The polypeptide is Elongation factor Tu, mitochondrial (TUFA) (Arabidopsis thaliana (Mouse-ear cress)).